We begin with the raw amino-acid sequence, 880 residues long: Paramyosin (880 aa).

The tract at residues 1–34 (MSGSLYRSPSAALYKSPSMSAFGGLPAAFGSMSV) is nonhelical region. Positions 35–859 (ADLGSLTRLE…LIRAKHRHQL (825 aa)) form a coiled coil. The segment at 860 to 880 (LRAKMLQRQKFTFSKMSNRDN) is nonhelical region.

Belongs to the paramyosin family. As to quaternary structure, homodimer.

It localises to the cytoplasm. It is found in the myofibril. Its function is as follows. Paramyosin is a major structural component of many thick filaments isolated from invertebrate muscles. The polypeptide is Paramyosin (Brugia malayi (Filarial nematode worm)).